The primary structure comprises 173 residues: Translation initiation factor IF-3 (173 aa).

Belongs to the IF-3 family. Monomer.

The protein localises to the cytoplasm. IF-3 binds to the 30S ribosomal subunit and shifts the equilibrium between 70S ribosomes and their 50S and 30S subunits in favor of the free subunits, thus enhancing the availability of 30S subunits on which protein synthesis initiation begins. This chain is Translation initiation factor IF-3, found in Caulobacter sp. (strain K31).